The following is a 29-amino-acid chain: Prolamin alpha-1 (29 aa).

In Dactylis glomerata (Orchard grass), this protein is Prolamin alpha-1.